The following is a 377-amino-acid chain: Succinyl-diaminopimelate desuccinylase (377 aa).

His68 provides a ligand contact to Zn(2+). Residue Asp70 is part of the active site. Residue Asp101 coordinates Zn(2+). Glu135 functions as the Proton acceptor in the catalytic mechanism. Zn(2+) is bound by residues Glu136, Glu164, and His350.

The protein belongs to the peptidase M20A family. DapE subfamily. As to quaternary structure, homodimer. Zn(2+) is required as a cofactor.

The enzyme catalyses N-succinyl-(2S,6S)-2,6-diaminopimelate + H2O = (2S,6S)-2,6-diaminopimelate + succinate. It functions in the pathway amino-acid biosynthesis; L-lysine biosynthesis via DAP pathway; LL-2,6-diaminopimelate from (S)-tetrahydrodipicolinate (succinylase route): step 3/3. Functionally, catalyzes the hydrolysis of N-succinyl-L,L-diaminopimelic acid (SDAP), forming succinate and LL-2,6-diaminopimelate (DAP), an intermediate involved in the bacterial biosynthesis of lysine and meso-diaminopimelic acid, an essential component of bacterial cell walls. The polypeptide is Succinyl-diaminopimelate desuccinylase (dapE) (Vibrio cholerae serotype O1 (strain ATCC 39315 / El Tor Inaba N16961)).